The sequence spans 670 residues: Transketolase, plasmid (670 aa).

Residue histidine 32 coordinates substrate. Residues histidine 72 and 120-122 contribute to the thiamine diphosphate site; that span reads GPL. Aspartate 161 is a binding site for Mg(2+). Residues glycine 162 and asparagine 191 each coordinate thiamine diphosphate. Residues asparagine 191 and isoleucine 193 each coordinate Mg(2+). Substrate is bound by residues histidine 267, arginine 364, and serine 391. Histidine 267 contacts thiamine diphosphate. Glutamate 417 functions as the Proton donor in the catalytic mechanism. Phenylalanine 443 contributes to the thiamine diphosphate binding site. The substrate site is built by histidine 467, aspartate 475, and arginine 526.

This sequence belongs to the transketolase family. Homodimer. Mg(2+) is required as a cofactor. Requires Ca(2+) as cofactor. The cofactor is Mn(2+). It depends on Co(2+) as a cofactor. Thiamine diphosphate serves as cofactor.

The catalysed reaction is D-sedoheptulose 7-phosphate + D-glyceraldehyde 3-phosphate = aldehydo-D-ribose 5-phosphate + D-xylulose 5-phosphate. Its pathway is carbohydrate biosynthesis; Calvin cycle. In terms of biological role, catalyzes the transfer of a two-carbon ketol group from a ketose donor to an aldose acceptor, via a covalent intermediate with the cofactor thiamine pyrophosphate. This chain is Transketolase, plasmid (cbbTP), found in Cupriavidus necator (strain ATCC 17699 / DSM 428 / KCTC 22496 / NCIMB 10442 / H16 / Stanier 337) (Ralstonia eutropha).